Here is a 282-residue protein sequence, read N- to C-terminus: Pantothenate synthetase (282 aa).

26–33 (MGNLHEGH) is an ATP binding site. His-33 (proton donor) is an active-site residue. Gln-57 contacts (R)-pantoate. Gln-57 is a binding site for beta-alanine. Residue 148 to 151 (GKKD) coordinates ATP. Gln-154 contacts (R)-pantoate. 185–188 (LSSR) contacts ATP.

It belongs to the pantothenate synthetase family. In terms of assembly, homodimer.

It localises to the cytoplasm. It carries out the reaction (R)-pantoate + beta-alanine + ATP = (R)-pantothenate + AMP + diphosphate + H(+). Its pathway is cofactor biosynthesis; (R)-pantothenate biosynthesis; (R)-pantothenate from (R)-pantoate and beta-alanine: step 1/1. Its function is as follows. Catalyzes the condensation of pantoate with beta-alanine in an ATP-dependent reaction via a pantoyl-adenylate intermediate. This chain is Pantothenate synthetase, found in Paracidovorax citrulli (strain AAC00-1) (Acidovorax citrulli).